A 377-amino-acid chain; its full sequence is Nitric oxide reductase FlRd-NAD(+) reductase (377 aa).

This sequence belongs to the FAD-dependent oxidoreductase family. FAD is required as a cofactor.

Its subcellular location is the cytoplasm. It catalyses the reaction 2 reduced [nitric oxide reductase rubredoxin domain] + NAD(+) + H(+) = 2 oxidized [nitric oxide reductase rubredoxin domain] + NADH. It functions in the pathway nitrogen metabolism; nitric oxide reduction. Functionally, one of at least two accessory proteins for anaerobic nitric oxide (NO) reductase. Reduces the rubredoxin moiety of NO reductase. The polypeptide is Nitric oxide reductase FlRd-NAD(+) reductase (Escherichia coli O6:K15:H31 (strain 536 / UPEC)).